We begin with the raw amino-acid sequence, 338 residues long: Fructose-1,6-bisphosphatase class 1 (338 aa).

4 residues coordinate Mg(2+): glutamate 91, aspartate 113, leucine 115, and aspartate 116. Substrate is bound by residues 116-119 (DGSS), asparagine 211, tyrosine 244, and lysine 277. Glutamate 283 provides a ligand contact to Mg(2+).

It belongs to the FBPase class 1 family. As to quaternary structure, homotetramer. It depends on Mg(2+) as a cofactor.

It is found in the cytoplasm. It catalyses the reaction beta-D-fructose 1,6-bisphosphate + H2O = beta-D-fructose 6-phosphate + phosphate. It functions in the pathway carbohydrate biosynthesis; gluconeogenesis. The sequence is that of Fructose-1,6-bisphosphatase class 1 from Oleidesulfovibrio alaskensis (strain ATCC BAA-1058 / DSM 17464 / G20) (Desulfovibrio alaskensis).